The chain runs to 306 residues: MLWHPDGYEPRVKAIEEEIYANEDRKDVPDKFKFDTVTKTGMVKLRVFKDDLIFKSQRSINLFASRKHPFKSFTADGEGLPLFAFRTKKPFFVRRDYVGFLFYQYEILKNGDFPEESDYEVKGECDGFTLFKVLFCTVKVKKTSYYRNKERISHILELNFGKKEDFRILTLVRCSEIRSVYVVEDKKVIMKWVFTSESKFNLNSSLFIIKAAIGCLPEVGDSIEDIPKFDWDSCPTIGCMCRTKEALFQPESRKDMHICPQLFLGETGPPHYNESSVPWLTKMNICISVLINFLEYTDFMSWMQDN.

This is an uncharacterized protein from Saccharomyces cerevisiae (strain ATCC 204508 / S288c) (Baker's yeast).